The following is a 152-amino-acid chain: Transcription elongation factor Spt5 (152 aa).

Positions 94 to 124 constitute a KOW domain; sequence PGDLVEVIAGPFKGQKAKVVKIDESKDEVVV.

This sequence belongs to the archaeal Spt5 family. In terms of assembly, heterodimer composed of Spt4 and Spt5. Interacts with RNA polymerase (RNAP) independently of nucleic acids. Forms a homodimer in solution.

Functionally, stimulates transcription elongation. In Pyrococcus furiosus (strain ATCC 43587 / DSM 3638 / JCM 8422 / Vc1), this protein is Transcription elongation factor Spt5.